Reading from the N-terminus, the 367-residue chain is Germination protease (367 aa).

A propeptide spanning residues 1-15 (MKEPLDLSKYSIRTD) is cleaved from the precursor.

Belongs to the peptidase A25 family. Homotetramer. Autoproteolytically processed. The inactive tetrameric zymogen termed p46 autoprocesses to a smaller form termed p41, which is active only during spore germination.

The enzyme catalyses Endopeptidase action with P4 Glu or Asp, P1 preferably Glu &gt; Asp, P1' hydrophobic and P2' Ala.. Its function is as follows. Initiates the rapid degradation of small, acid-soluble proteins during spore germination. This Bacillus cereus (strain B4264) protein is Germination protease.